The following is a 596-amino-acid chain: Glomulin (596 aa).

Ala-2 is modified (N-acetylalanine). The segment at 2–555 is alpha-helical region with structural similarity to HEAT repeats; the sequence is AVEELQSIIK…EEIPSMPPEM (554 aa). Residues 299–596 form an important for interaction with RBX1 region; that stretch reads IDQLPMVLSP…STSEENVGIK (298 aa).

Interacts with FKBP4 and FKBP1A. Interacts with RBX1 (via RING domain). Identified in complexes that contain RBX1 plus one of the cullins CUL1, CUL2, CUL3, and CUL4A. Identified in a SCF complex composed of CUL1, RBX1, SKP1, FBXW7 and GLMN. Component of a SCF-like complex consisting of CUL7, RBX1, SKP1, FBXW8 and GLMN. Interacts with unphosphorylated MET and is released upon MET phosphorylation. Phosphorylated on tyrosine residues. Ubiquitous. Detected in embryonic vasculature and embryonic perichondrium, and in adult eye, brain, heart, testis, kidney, smooth muscle and skeletal muscle.

Functionally, regulatory component of cullin-RING-based SCF (SKP1-Cullin-F-box protein) E3 ubiquitin-protein ligase complexes. Inhibits E3 ubiquitin ligase activity by binding to the RING domain of RBX1 and inhibiting its interaction with the E2 ubiquitin-conjugating enzyme CDC34. Inhibits RBX1-mediated neddylation of CUL1. Required for normal stability and normal cellular levels of key components of SCF ubiquitin ligase complexes, including FBXW7, RBX1, CUL1, CUL2, CUL3, CUL4A, and thereby contributes to the regulation of CCNE1 and MYC levels. Essential for normal development of the vasculature. Contributes to the regulation of RPS6KB1 phosphorylation. This chain is Glomulin (Glmn), found in Mus musculus (Mouse).